The following is a 382-amino-acid chain: Mannitol-1-phosphate 5-dehydrogenase (382 aa).

Ala-3 to Gly-14 lines the NAD(+) pocket.

The protein belongs to the mannitol dehydrogenase family.

The enzyme catalyses D-mannitol 1-phosphate + NAD(+) = beta-D-fructose 6-phosphate + NADH + H(+). This is Mannitol-1-phosphate 5-dehydrogenase from Tolumonas auensis (strain DSM 9187 / NBRC 110442 / TA 4).